The following is a 333-amino-acid chain: Ribosomal RNA small subunit methyltransferase H (333 aa).

Residues Gly34–His36, Asp59, Phe86, Asp112, and Gln119 contribute to the S-adenosyl-L-methionine site.

The protein belongs to the methyltransferase superfamily. RsmH family.

Its subcellular location is the cytoplasm. The catalysed reaction is cytidine(1402) in 16S rRNA + S-adenosyl-L-methionine = N(4)-methylcytidine(1402) in 16S rRNA + S-adenosyl-L-homocysteine + H(+). Specifically methylates the N4 position of cytidine in position 1402 (C1402) of 16S rRNA. The protein is Ribosomal RNA small subunit methyltransferase H of Prosthecochloris aestuarii (strain DSM 271 / SK 413).